Here is a 375-residue protein sequence, read N- to C-terminus: MENFPTEYFLNTSVRLLEYIRYRDSNYTREERIENLHYAYNKAAHHFAQPRQQQMLKVDPKRLQASLQTIVGMVVYSWAKVSKECMADLSIHYTYTLVLDDSSDDPHPAMLNYFDDLQAGREQAHPWWALVNEHFPNVLRHFGPFCSLNLIRSTMDFFEGCWIEQYNFGGFPGSDDYPQFLRRMNGLGHCVGASLWPKDLFDERKHFLEITSAVAQMENWMVWVNDLMSFYKEFDDERDQISLVKNFVTCHEITLDEALEKLTQETLHSSKQMVAVFSDKDPQVMDTIECFMHGYVTWHLCDARYRLHEIYEKVKDQDTEDAKKFCKFFEQAANVGAVAPSEWAYPQVAQLANVRAKDDVKEAQKPILSSIELVE.

Belongs to the trichodiene synthase family.

The catalysed reaction is (2E,6E)-farnesyl diphosphate = trichodiene + diphosphate. It functions in the pathway sesquiterpene biosynthesis; trichothecene biosynthesis. TS is a member of the terpene cyclase group of enzymes. It catalyzes the isomerization and cyclization of farnesyl pyro-phosphate to form trichodiene, the first cyclic intermediate in the biosynthetic pathway for trichothecenes. It serves to branch trichothecene biosynthesis from the isoprenoid pathway. The sequence is that of Trichodiene synthase (TRI5) from Gibberella zeae (strain ATCC MYA-4620 / CBS 123657 / FGSC 9075 / NRRL 31084 / PH-1) (Wheat head blight fungus).